Here is a 140-residue protein sequence, read N- to C-terminus: 3-hydroxyacyl-[acyl-carrier-protein] dehydratase FabZ (140 aa).

The active site involves His-47.

It belongs to the thioester dehydratase family. FabZ subfamily.

Its subcellular location is the cytoplasm. It catalyses the reaction a (3R)-hydroxyacyl-[ACP] = a (2E)-enoyl-[ACP] + H2O. Its function is as follows. Involved in unsaturated fatty acids biosynthesis. Catalyzes the dehydration of short chain beta-hydroxyacyl-ACPs and long chain saturated and unsaturated beta-hydroxyacyl-ACPs. The chain is 3-hydroxyacyl-[acyl-carrier-protein] dehydratase FabZ from Streptococcus agalactiae serotype III (strain NEM316).